A 139-amino-acid polypeptide reads, in one-letter code: Protein FAM216B (139 aa).

The protein belongs to the FAM216 family.

The sequence is that of Protein FAM216B (FAM216B) from Homo sapiens (Human).